Reading from the N-terminus, the 499-residue chain is Lysine--tRNA ligase (499 aa).

Mg(2+) contacts are provided by Glu408 and Glu415.

The protein belongs to the class-II aminoacyl-tRNA synthetase family. In terms of assembly, homodimer. It depends on Mg(2+) as a cofactor.

It localises to the cytoplasm. It catalyses the reaction tRNA(Lys) + L-lysine + ATP = L-lysyl-tRNA(Lys) + AMP + diphosphate. In Bacillus cytotoxicus (strain DSM 22905 / CIP 110041 / 391-98 / NVH 391-98), this protein is Lysine--tRNA ligase.